Consider the following 314-residue polypeptide: Annexin-like protein RJ4 (314 aa).

4 Annexin repeats span residues 10 to 81, 82 to 153, 165 to 236, and 240 to 311; these read FCAK…RWTL, DPAD…ALVT, KLAN…TAIR, and DPKK…TLLG. Ca(2+) contacts are provided by Gly-25, Gly-27, and Glu-67. The Ca(2+) site is built by Ile-253, Arg-255, Gly-257, Asp-297, and Thr-298.

Belongs to the annexin (TC 1.A.31.1) family. In terms of tissue distribution, predominantly in developing fruit.

This Fragaria ananassa (Strawberry) protein is Annexin-like protein RJ4.